The sequence spans 155 residues: MAVFTFEDQTTSPVAPATLYKALVKDADTIVPKAVDSFKSVEIVEGNGGPGTIKKISFVEDGETKFVLHKIEEIDEANLGYSYSIVGGAALPDTAEKISIDSKLSDGPNGGSVVKLSIKYHSKGDAPPNEDELKAGKAKSDALFKVIEAYLLANP.

The protein belongs to the BetVI family.

In Phaseolus vulgaris (Kidney bean), this protein is Pathogenesis-related protein 2.